The sequence spans 1157 residues: DNA-directed RNA polymerase subunit beta (1157 aa).

This sequence belongs to the RNA polymerase beta chain family. In terms of assembly, the RNAP catalytic core consists of 2 alpha, 1 beta, 1 beta' and 1 omega subunit. When a sigma factor is associated with the core the holoenzyme is formed, which can initiate transcription.

It catalyses the reaction RNA(n) + a ribonucleoside 5'-triphosphate = RNA(n+1) + diphosphate. DNA-dependent RNA polymerase catalyzes the transcription of DNA into RNA using the four ribonucleoside triphosphates as substrates. The polypeptide is DNA-directed RNA polymerase subunit beta (Tropheryma whipplei (strain Twist) (Whipple's bacillus)).